Consider the following 113-residue polypeptide: Retrotransposon Gag-like protein 8A (113 aa).

Belongs to the FAM127 family.

The sequence is that of Retrotransposon Gag-like protein 8A from Homo sapiens (Human).